Here is a 222-residue protein sequence, read N- to C-terminus: Pyrrolidone-carboxylate peptidase (222 aa).

Catalysis depends on residues Glu80, Cys146, and His170.

Belongs to the peptidase C15 family. Homotetramer.

It localises to the cytoplasm. It catalyses the reaction Release of an N-terminal pyroglutamyl group from a polypeptide, the second amino acid generally not being Pro.. Functionally, removes 5-oxoproline from various penultimate amino acid residues except L-proline. The sequence is that of Pyrrolidone-carboxylate peptidase from Mycobacterium tuberculosis (strain ATCC 25177 / H37Ra).